The sequence spans 199 residues: Cytosine-containing mismatch-binding protein 1 (199 aa).

A DNA-binding region (HMG box) is located at residues 123–197; it reads PKKPSSAFIL…QYDKFMKEAG (75 aa).

As to quaternary structure, monomer.

It localises to the nucleus. Functionally, binds to cytosines in base mismatches and opposite chemically altered guanines. May be involved in repair of DNA damage. The sequence is that of Cytosine-containing mismatch-binding protein 1 from Schizosaccharomyces pombe (strain 972 / ATCC 24843) (Fission yeast).